A 495-amino-acid chain; its full sequence is Transcription termination/antitermination protein NusA (495 aa).

Residues 135–200 enclose the S1 motif domain; the sequence is GKIVTGTVKK…KTAQLFVTRS (66 aa). Residues 302 to 374 form the KH domain; the sequence is NHSMDIAVEA…LDEEFAQILV (73 aa).

This sequence belongs to the NusA family. As to quaternary structure, monomer. Binds directly to the core enzyme of the DNA-dependent RNA polymerase and to nascent RNA.

The protein resides in the cytoplasm. Participates in both transcription termination and antitermination. The sequence is that of Transcription termination/antitermination protein NusA from Haemophilus influenzae (strain ATCC 51907 / DSM 11121 / KW20 / Rd).